A 306-amino-acid chain; its full sequence is 4-hydroxy-3-methylbut-2-enyl diphosphate reductase 1 (306 aa).

Cys-10 contacts [4Fe-4S] cluster. Positions 39 and 72 each coordinate (2E)-4-hydroxy-3-methylbut-2-enyl diphosphate. Dimethylallyl diphosphate contacts are provided by His-39 and His-72. Residues His-39 and His-72 each coordinate isopentenyl diphosphate. Cys-94 provides a ligand contact to [4Fe-4S] cluster. His-122 is a (2E)-4-hydroxy-3-methylbut-2-enyl diphosphate binding site. His-122 is a dimethylallyl diphosphate binding site. His-122 contacts isopentenyl diphosphate. Glu-124 functions as the Proton donor in the catalytic mechanism. Thr-162 provides a ligand contact to (2E)-4-hydroxy-3-methylbut-2-enyl diphosphate. Residue Cys-192 coordinates [4Fe-4S] cluster. Ser-220, Ser-221, Asn-222, and Ser-264 together coordinate (2E)-4-hydroxy-3-methylbut-2-enyl diphosphate. The dimethylallyl diphosphate site is built by Ser-220, Ser-221, Asn-222, and Ser-264. Residues Ser-220, Ser-221, Asn-222, and Ser-264 each contribute to the isopentenyl diphosphate site.

The protein belongs to the IspH family. [4Fe-4S] cluster serves as cofactor.

The catalysed reaction is isopentenyl diphosphate + 2 oxidized [2Fe-2S]-[ferredoxin] + H2O = (2E)-4-hydroxy-3-methylbut-2-enyl diphosphate + 2 reduced [2Fe-2S]-[ferredoxin] + 2 H(+). The enzyme catalyses dimethylallyl diphosphate + 2 oxidized [2Fe-2S]-[ferredoxin] + H2O = (2E)-4-hydroxy-3-methylbut-2-enyl diphosphate + 2 reduced [2Fe-2S]-[ferredoxin] + 2 H(+). It participates in isoprenoid biosynthesis; dimethylallyl diphosphate biosynthesis; dimethylallyl diphosphate from (2E)-4-hydroxy-3-methylbutenyl diphosphate: step 1/1. The protein operates within isoprenoid biosynthesis; isopentenyl diphosphate biosynthesis via DXP pathway; isopentenyl diphosphate from 1-deoxy-D-xylulose 5-phosphate: step 6/6. In terms of biological role, catalyzes the conversion of 1-hydroxy-2-methyl-2-(E)-butenyl 4-diphosphate (HMBPP) into a mixture of isopentenyl diphosphate (IPP) and dimethylallyl diphosphate (DMAPP). Acts in the terminal step of the DOXP/MEP pathway for isoprenoid precursor biosynthesis. This chain is 4-hydroxy-3-methylbut-2-enyl diphosphate reductase 1, found in Rhodopseudomonas palustris (strain ATCC BAA-98 / CGA009).